The chain runs to 557 residues: Probable protein kinase UbiB (557 aa).

The region spanning 121–509 (SFDTVPLASA…RKLQTRVVTA (389 aa)) is the Protein kinase domain. Residues 127-135 (LASASIAQV) and Lys154 contribute to the ATP site. The Proton acceptor role is filled by Asp289. The next 2 membrane-spanning stretches (helical) occupy residues 506–526 (VVTA…YGLH) and 535–555 (VPVW…VAWL).

The protein belongs to the ABC1 family. UbiB subfamily.

Its subcellular location is the cell inner membrane. It functions in the pathway cofactor biosynthesis; ubiquinone biosynthesis [regulation]. Its function is as follows. Is probably a protein kinase regulator of UbiI activity which is involved in aerobic coenzyme Q (ubiquinone) biosynthesis. The sequence is that of Probable protein kinase UbiB from Xanthomonas euvesicatoria pv. vesicatoria (strain 85-10) (Xanthomonas campestris pv. vesicatoria).